A 380-amino-acid polypeptide reads, in one-letter code: Putative 8-amino-7-oxononanoate synthase (380 aa).

Residue Arg-18 participates in substrate binding. Residue 106-107 (GY) coordinates pyridoxal 5'-phosphate. His-131 is a substrate binding site. Residues Ser-179, 205 to 208 (DEAH), and 236 to 239 (TFGK) contribute to the pyridoxal 5'-phosphate site. Lys-239 is subject to N6-(pyridoxal phosphate)lysine. Thr-352 provides a ligand contact to substrate.

The protein belongs to the class-II pyridoxal-phosphate-dependent aminotransferase family. BioF subfamily. In terms of assembly, homodimer. Requires pyridoxal 5'-phosphate as cofactor.

The catalysed reaction is 6-carboxyhexanoyl-[ACP] + L-alanine + H(+) = (8S)-8-amino-7-oxononanoate + holo-[ACP] + CO2. It functions in the pathway cofactor biosynthesis; biotin biosynthesis. Its function is as follows. Catalyzes the decarboxylative condensation of pimeloyl-[acyl-carrier protein] and L-alanine to produce 8-amino-7-oxononanoate (AON), [acyl-carrier protein], and carbon dioxide. The sequence is that of Putative 8-amino-7-oxononanoate synthase (bioF) from Neisseria gonorrhoeae (strain ATCC 700825 / FA 1090).